A 426-amino-acid chain; its full sequence is Enolase (426 aa).

Residue glutamine 163 coordinates (2R)-2-phosphoglycerate. Glutamate 205 serves as the catalytic Proton donor. Residues aspartate 242, glutamate 286, and aspartate 313 each contribute to the Mg(2+) site. Lysine 338, arginine 367, serine 368, and lysine 389 together coordinate (2R)-2-phosphoglycerate. Catalysis depends on lysine 338, which acts as the Proton acceptor.

The protein belongs to the enolase family. It depends on Mg(2+) as a cofactor.

It is found in the cytoplasm. The protein resides in the secreted. It localises to the cell surface. It catalyses the reaction (2R)-2-phosphoglycerate = phosphoenolpyruvate + H2O. Its pathway is carbohydrate degradation; glycolysis; pyruvate from D-glyceraldehyde 3-phosphate: step 4/5. Its function is as follows. Catalyzes the reversible conversion of 2-phosphoglycerate (2-PG) into phosphoenolpyruvate (PEP). It is essential for the degradation of carbohydrates via glycolysis. The chain is Enolase from Helicobacter pylori (strain P12).